The following is a 97-amino-acid chain: UPF0235 protein HD_0778 (97 aa).

It belongs to the UPF0235 family.

The sequence is that of UPF0235 protein HD_0778 from Haemophilus ducreyi (strain 35000HP / ATCC 700724).